A 105-amino-acid polypeptide reads, in one-letter code: Small ribosomal subunit protein uS10 (105 aa).

This sequence belongs to the universal ribosomal protein uS10 family. Part of the 30S ribosomal subunit.

Its function is as follows. Involved in the binding of tRNA to the ribosomes. The polypeptide is Small ribosomal subunit protein uS10 (Rickettsia prowazekii (strain Madrid E)).